Consider the following 369-residue polypeptide: Putative agmatine deiminase (369 aa).

The active-site Amidino-cysteine intermediate is the cysteine 361.

It belongs to the agmatine deiminase family.

It catalyses the reaction agmatine + H2O = N-carbamoylputrescine + NH4(+). This is Putative agmatine deiminase from Streptococcus mutans serotype c (strain ATCC 700610 / UA159).